Consider the following 952-residue polypeptide: Isoleucine--tRNA ligase (952 aa).

Residues 58–68 (PYANGDIHIGH) carry the 'HIGH' region motif. An L-isoleucyl-5'-AMP-binding site is contributed by E576. The 'KMSKS' region signature appears at 617–621 (KMSKS). K620 serves as a coordination point for ATP. 4 residues coordinate Zn(2+): C915, C918, C935, and C938.

The protein belongs to the class-I aminoacyl-tRNA synthetase family. IleS type 1 subfamily. In terms of assembly, monomer. Zn(2+) serves as cofactor.

The protein localises to the cytoplasm. It catalyses the reaction tRNA(Ile) + L-isoleucine + ATP = L-isoleucyl-tRNA(Ile) + AMP + diphosphate. Its function is as follows. Catalyzes the attachment of isoleucine to tRNA(Ile). As IleRS can inadvertently accommodate and process structurally similar amino acids such as valine, to avoid such errors it has two additional distinct tRNA(Ile)-dependent editing activities. One activity is designated as 'pretransfer' editing and involves the hydrolysis of activated Val-AMP. The other activity is designated 'posttransfer' editing and involves deacylation of mischarged Val-tRNA(Ile). The polypeptide is Isoleucine--tRNA ligase (Aliivibrio fischeri (strain MJ11) (Vibrio fischeri)).